The following is a 154-amino-acid chain: Probable deoxyuridine 5'-triphosphate nucleotidohydrolase (154 aa).

The protein belongs to the dCTP deaminase family. Archaeal dUTPase subfamily.

It carries out the reaction dUTP + H2O = dUMP + diphosphate + H(+). It participates in pyrimidine metabolism; dUMP biosynthesis; dUMP from dCTP (dUTP route): step 2/2. This enzyme is involved in nucleotide metabolism: it produces dUMP, the immediate precursor of thymidine nucleotides and it decreases the intracellular concentration of dUTP so that uracil cannot be incorporated into DNA. The polypeptide is Probable deoxyuridine 5'-triphosphate nucleotidohydrolase (Methanopyrus kandleri (strain AV19 / DSM 6324 / JCM 9639 / NBRC 100938)).